Consider the following 249-residue polypeptide: ATP synthase subunit a, chloroplastic (249 aa).

The next 5 helical transmembrane spans lie at 40-60 (QVLI…VLAI), 97-117 (VPFI…GALL), 136-156 (INTT…AGLS), 201-221 (LVVV…VMFL), and 222-242 (GLFT…AYIG).

It belongs to the ATPase A chain family. As to quaternary structure, F-type ATPases have 2 components, CF(1) - the catalytic core - and CF(0) - the membrane proton channel. CF(1) has five subunits: alpha(3), beta(3), gamma(1), delta(1), epsilon(1). CF(0) has four main subunits: a, b, b' and c.

The protein resides in the plastid. It is found in the chloroplast thylakoid membrane. Functionally, key component of the proton channel; it plays a direct role in the translocation of protons across the membrane. This is ATP synthase subunit a, chloroplastic from Olimarabidopsis pumila (Dwarf rocket).